The following is a 249-amino-acid chain: Hydroxyacylglutathione hydrolase (249 aa).

Positions 54, 56, 58, 59, 113, 138, and 176 each coordinate Zn(2+).

It belongs to the metallo-beta-lactamase superfamily. Glyoxalase II family. As to quaternary structure, monomer. The cofactor is Zn(2+).

It catalyses the reaction an S-(2-hydroxyacyl)glutathione + H2O = a 2-hydroxy carboxylate + glutathione + H(+). It functions in the pathway secondary metabolite metabolism; methylglyoxal degradation; (R)-lactate from methylglyoxal: step 2/2. Its function is as follows. Thiolesterase that catalyzes the hydrolysis of S-D-lactoyl-glutathione to form glutathione and D-lactic acid. The protein is Hydroxyacylglutathione hydrolase of Synechococcus sp. (strain CC9605).